Consider the following 373-residue polypeptide: uncharacterized protein (373 aa).

Positions 14 to 168 constitute a CP-type G domain; it reads KKIVNKIIDE…LMDTPGVLEM (155 aa). Position 117 to 124 (117 to 124) interacts with GTP; the sequence is GYPNVGKS.

It belongs to the TRAFAC class YlqF/YawG GTPase family.

This is an uncharacterized protein from Methanocaldococcus jannaschii (strain ATCC 43067 / DSM 2661 / JAL-1 / JCM 10045 / NBRC 100440) (Methanococcus jannaschii).